The following is a 234-amino-acid chain: Leucyl/phenylalanyl-tRNA--protein transferase (234 aa).

This sequence belongs to the L/F-transferase family.

The protein localises to the cytoplasm. The enzyme catalyses N-terminal L-lysyl-[protein] + L-leucyl-tRNA(Leu) = N-terminal L-leucyl-L-lysyl-[protein] + tRNA(Leu) + H(+). It carries out the reaction N-terminal L-arginyl-[protein] + L-leucyl-tRNA(Leu) = N-terminal L-leucyl-L-arginyl-[protein] + tRNA(Leu) + H(+). It catalyses the reaction L-phenylalanyl-tRNA(Phe) + an N-terminal L-alpha-aminoacyl-[protein] = an N-terminal L-phenylalanyl-L-alpha-aminoacyl-[protein] + tRNA(Phe). Functionally, functions in the N-end rule pathway of protein degradation where it conjugates Leu, Phe and, less efficiently, Met from aminoacyl-tRNAs to the N-termini of proteins containing an N-terminal arginine or lysine. The chain is Leucyl/phenylalanyl-tRNA--protein transferase from Escherichia coli O81 (strain ED1a).